The chain runs to 144 residues: Large ribosomal subunit protein uL13 (144 aa).

The protein belongs to the universal ribosomal protein uL13 family. As to quaternary structure, part of the 50S ribosomal subunit.

In terms of biological role, this protein is one of the early assembly proteins of the 50S ribosomal subunit, although it is not seen to bind rRNA by itself. It is important during the early stages of 50S assembly. The protein is Large ribosomal subunit protein uL13 of Oleidesulfovibrio alaskensis (strain ATCC BAA-1058 / DSM 17464 / G20) (Desulfovibrio alaskensis).